The following is a 100-amino-acid chain: Small ribosomal subunit protein uS14c (100 aa).

Belongs to the universal ribosomal protein uS14 family. As to quaternary structure, part of the 30S ribosomal subunit.

The protein resides in the plastid. Functionally, binds 16S rRNA, required for the assembly of 30S particles. This chain is Small ribosomal subunit protein uS14c, found in Cuscuta exaltata (Tall dodder).